We begin with the raw amino-acid sequence, 1117 residues long: Cytospin-A (1117 aa).

3 disordered regions span residues 1-176 (MKKA…NQIS), 293-323 (SLSP…GSVE), and 358-390 (SSDD…NASE). Residues 45-90 (TAASLSKTKSSDDLLAGMAGGVTVTNGVKGKKSTCPSAAPSASAPA) are compositionally biased toward low complexity. The span at 93–117 (TVENKSKISTGTASSTKRNTSTGNK) shows a compositional bias: polar residues. Basic and acidic residues-rich tracts occupy residues 120–131 (SSTRERLRERTR) and 158–171 (TATE…KSKS). Positions 168-280 (KSKSDNQISD…LNALGFSLEQ (113 aa)) form a coiled coil. A compositionally biased stretch (polar residues) spans 293 to 303 (SLSPEITPGNQ). Low complexity predominate over residues 358–377 (SSDDALDAPSSSESEGIPSI). 3 positions are modified to phosphoserine: serine 384, serine 385, and serine 389. 2 coiled-coil regions span residues 394-449 (ACLT…MESL) and 487-807 (RYME…RGRV). Serine 868, serine 881, and serine 887 each carry phosphoserine. Positions 919–1001 (RTSSASRPAS…SRIREERKDP (83 aa)) are disordered. Positions 946 to 956 (RSSEEMKRDIS) are enriched in basic and acidic residues. A compositionally biased stretch (low complexity) spans 971 to 990 (TTSPQLSLSSSPTASVTPTT). In terms of domain architecture, Calponin-homology (CH) spans 1011–1116 (GSKRNALLKW…YVTAIYKYFE (106 aa)).

Belongs to the cytospin-A family. In terms of assembly, may interact with both microtubules and actin cytoskeleton.

It localises to the cytoplasm. The protein resides in the cytoskeleton. Its subcellular location is the spindle. The protein localises to the cell junction. It is found in the gap junction. Functionally, involved in cytokinesis and spindle organization. May play a role in actin cytoskeleton organization and microtubule stabilization and hence required for proper cell adhesion and migration. In Pan troglodytes (Chimpanzee), this protein is Cytospin-A (SPECC1L).